The following is a 150-amino-acid chain: D-aminoacyl-tRNA deacylase (150 aa).

The Gly-cisPro motif, important for rejection of L-amino acids motif lies at 138 to 139 (GP).

This sequence belongs to the DTD family. In terms of assembly, homodimer.

It is found in the cytoplasm. It catalyses the reaction glycyl-tRNA(Ala) + H2O = tRNA(Ala) + glycine + H(+). It carries out the reaction a D-aminoacyl-tRNA + H2O = a tRNA + a D-alpha-amino acid + H(+). Its function is as follows. An aminoacyl-tRNA editing enzyme that deacylates mischarged D-aminoacyl-tRNAs. Also deacylates mischarged glycyl-tRNA(Ala), protecting cells against glycine mischarging by AlaRS. Acts via tRNA-based rather than protein-based catalysis; rejects L-amino acids rather than detecting D-amino acids in the active site. By recycling D-aminoacyl-tRNA to D-amino acids and free tRNA molecules, this enzyme counteracts the toxicity associated with the formation of D-aminoacyl-tRNA entities in vivo and helps enforce protein L-homochirality. The protein is D-aminoacyl-tRNA deacylase of Flavobacterium psychrophilum (strain ATCC 49511 / DSM 21280 / CIP 103535 / JIP02/86).